Here is a 662-residue protein sequence, read N- to C-terminus: Probable dolichyl-phosphate-mannose--protein mannosyltransferase 7 (662 aa).

The Lumenal portion of the chain corresponds to 1 to 26; the sequence is MKDLRLQGPYRKYIPYNIFQQCGIGH. A helical transmembrane segment spans residues 27-47; sequence LKTLDYIFAFLIVITNFTLIW. The Cytoplasmic segment spans residues 48–159; that stretch reads KSHSSSFWNR…GTIISFDSLE (112 aa). The chain crosses the membrane as a helical span at residues 160–180; the sequence is WCLFSVVIYSFISISIAKLGT. The Lumenal portion of the chain corresponds to 181–195; that stretch reads TNWFANVITLSISLG. The helical transmembrane segment at 196–216 threads the bilayer; that stretch reads LAISSKFIGIVTWAFVILSFV. Residues 217 to 235 are Cytoplasmic-facing; it reads RQFDRLISDVKVTTIQIIK. A helical transmembrane segment spans residues 236–256; that stretch reads FVILCLLFVLIIPGSIFIISY. Residues 257–482 lie on the Lumenal side of the membrane; sequence SNLLSNFKTD…MEYPVIPRTT (226 aa). An MIR 1 domain is found at 289 to 344; sequence PSRLYYGSTITLRHLDSMVGYLASHDISYPSDVDEQLVALSFEEFAADNEWLIEHP. N347 is a glycosylation site (N-linked (GlcNAc...) asparagine). 2 consecutive MIR domains span residues 359–418 and 432–488; these read LIPV…VLLI and DKYI…IDSV. Residues 483-503 traverse the membrane as a helical segment; it reads FLIDSVQLPVDFQVPMIEYYI. Over 504-565 the chain is Cytoplasmic; sequence GKISSSAEFN…KWPITLDTDS (62 aa). Residues 566–586 traverse the membrane as a helical segment; the sequence is PVWFNFAWYGSLLSMIIFMCV. Residues 587 to 617 are Lumenal-facing; it reads QCKRMISWNPWTTAEPSFSIKWEVYNEFGWE. Residues 618 to 638 traverse the membrane as a helical segment; that stretch reads CIVGWFLHFYIFTMSPHFNLG. The Cytoplasmic segment spans residues 639-662; sequence KKLYFQSFFFSVLCLLESLDCLAK.

The protein belongs to the glycosyltransferase 39 family.

The protein resides in the endoplasmic reticulum membrane. It carries out the reaction a di-trans,poly-cis-dolichyl beta-D-mannosyl phosphate + L-seryl-[protein] = 3-O-(alpha-D-mannosyl)-L-seryl-[protein] + a di-trans,poly-cis-dolichyl phosphate + H(+). It catalyses the reaction a di-trans,poly-cis-dolichyl beta-D-mannosyl phosphate + L-threonyl-[protein] = 3-O-(alpha-D-mannosyl)-L-threonyl-[protein] + a di-trans,poly-cis-dolichyl phosphate + H(+). It participates in protein modification; protein glycosylation. Probable protein O-mannosyltransferase involved in O-glycosylation which is essential for cell wall rigidity. Transfers mannose from Dol-P-mannose to Ser or Thr residues on proteins. The polypeptide is Probable dolichyl-phosphate-mannose--protein mannosyltransferase 7 (Saccharomyces cerevisiae (strain ATCC 204508 / S288c) (Baker's yeast)).